A 71-amino-acid polypeptide reads, in one-letter code: Plasticin-DA1 (71 aa).

The signal sequence occupies residues 1-22 (MAFLKKSLFLVLFLALVPLSIC). Residues 23-42 (EAEKREEENEEKQEDDDESE) constitute a propeptide that is removed on maturation. Residues 25–45 (EKREEENEEKQEDDDESEKKR) are disordered. Positions 30–40 (ENEEKQEDDDE) are enriched in acidic residues. Gly-68 bears the Glycine amide mark. Positions 70–71 (ER) are excised as a propeptide.

This sequence belongs to the frog skin active peptide (FSAP) family. Plasticin subfamily. As to expression, expressed by the skin glands.

It is found in the secreted. Its subcellular location is the target cell membrane. Neutral peptide with no antimicrobial activity. Does not permeate bacterial membranes. May act in synergy with cationic peptides by enhancing their activity. Has a moderate hemolytic activity. It interacts with zwitterionic phospholipids (DMPC) without perturbing either the interface or inside of the bilayer, whereas it causes little perturbations at the interface peptide-anionic vesicles (DMPG) as well as in the bilayer alkyl chains. This Agalychnis dacnicolor (Giant Mexican leaf frog) protein is Plasticin-DA1.